Here is a 359-residue protein sequence, read N- to C-terminus: Tropomodulin-1 (359 aa).

Positions 39 to 61 (PDNALLPAGLRQKDQTTKAPTGP) are disordered. A tropomyosin-binding region spans residues 39 to 138 (PDNALLPAGL…CDIAAILGMH (100 aa)).

The protein belongs to the tropomodulin family. Binds to the N-terminus of tropomyosin and to actin. Interacts with FLII.

It is found in the cytoplasm. Its subcellular location is the cytoskeleton. In terms of biological role, blocks the elongation and depolymerization of the actin filaments at the pointed end. The Tmod/TM complex contributes to the formation of the short actin protofilament, which in turn defines the geometry of the membrane skeleton. May play an important role in regulating the organization of actin filaments by preferentially binding to a specific tropomyosin isoform at its N-terminus. This Bos taurus (Bovine) protein is Tropomodulin-1 (TMOD1).